A 1470-amino-acid chain; its full sequence is MGAATSALNRRQLDEFEHIRLRPNGKKKYQIKHLIWAGKKMDRFGLHEKLLETEEGCKKIIEVLSPLEPTGSEGMKSLYNLVCVLLCVHQEKKVKDTEEALAIVRQCCHLVDKEKTAVTPPGGQQKNNTGGTATPGGSQNFPAQQQGNAWVHVPLSPRTLNAWVKAVEEKKFGAEIVPMFQALSEGCTPYDINQMLNVLGDHQGALQIVKEIINEEAAQWDVTHPPPAGPLPAGQLRDPGGSDIAGTTSTVQEQLEWIYTANPRVDVGAIYRRWIILGLQKCVKMYNPVSVLDIRQGPKEPFKDYVDRFYKAIRAEQASGEVKQWMTESLLIQNANPDCKVILKGLGMHPTLEEMLTACQGVGGPSYKAKVMAEMMQNLQSQNMVQQGGGRGRPRPPPKCYNCGKFGHMQRQCPEPRKIKCLKCGKPGHLAKDCRGQVNFFRVWPVDGDKTKKFSRSHSWGGTKCAPSTEQLYTLRPSKEAPAAVCRERETNEKSEQKPPSEQSRLERGIFFELPLWRRPIRTCIIGGTAVKALLDTGADDTIIKDTDLQLRGSWRPKIVGGIGGGLNVKEYDNVEVQLEDKILRGTVLIGATPINIIGRNFLAQAGAKLVMGQLSQTIPITPVRLKEGARGPRLKQWPLSKEKIIALQEICKTLEEEGKLSRVGGDNAYNTPVFCIRKKDKSQWRMLVDFRELNKATQDFFEVQLGIPHPAGLKKMKQITIIDVGDAYYSIPLDPEFRKYTAFTIPTVNNEGPGIRYQFNCLPQGWKGSPTIFQNTASKILEEIKKELKQLTIVQYMDDLWVGSQEEGPKHDQLVQTLRNRLQEWGLETPEKKVQREPPFEWMGYKLWPHKWKLQSIELEKKEQWTVNDLQKLVGKLNWAAQLYPGLRTKNICKLLRGKKNLLDVVEWTPEAEAEYEENKEILKTEQEGTYYAPEKPLRAAVQKLGDGQWSYQFKQEGKILKVGKFAKQKATHTNELRVLAGVVQKIGKEALVIWGQLPTFELPVERDTWEQWWADYWQVSWIPEWDFVSVPPLVTLWYTLTKEPIPGEDVYYVDGACNRQSKEGKAGYITQQGKQRVQQLENTTNQQAELTAIKMALEDSGPKVNIVTDSQYAMGILTAQPTQSDSPLVEQIIAQMVQKEAIYLQWVPAHKGIGGNEEIDKLVSKGVRRILFIGRIEEAQEEHDRYHSNWRNLADTFGLPQIVAKEIVAMCPKCQVKGEPIHGQVDASPGVWQMDCTHIEGKIVIVAVHVASGFIEAEVIPRETGKETAKFLLKIIGRWPITHLHTDNGPNFTSQEVAAMCWWGKVEHTTGVPYNPQSQGSIESMNKQLKEIIGKIRDDCQYTETAVLMACHIHNFKRKGGIGGLTAAERLINMITTQLEINTLQTKIQKILNFRVYYREGRDPVWKGPARLIWKGEGAVVLKEGEELKVVPRRKAKIIKDYEPRKTLGDETHLEGAGGSDHQMAGDS.

G2 carries N-myristoyl glycine; by host lipidation. A Nuclear export signal motif is present at residues 16 to 22 (FEHIRLR). Residues 26-32 (KKKYQIK) carry the Nuclear localization signal motif. A disordered region spans residues 117–144 (AVTPPGGQQKNNTGGTATPGGSQNFPAQ). Residues 122-144 (GGQQKNNTGGTATPGGSQNFPAQ) show a composition bias toward polar residues. CCHC-type zinc fingers lie at residues 398–415 (PKCY…QCPE) and 419–436 (IKCL…DCRG). Residues 479–504 (KEAPAAVCRERETNEKSEQKPPSEQS) are disordered. A compositionally biased stretch (basic and acidic residues) spans 486-504 (CRERETNEKSEQKPPSEQS). Residues 531 to 602 (VKALLDTGAD…TPINIIGRNF (72 aa)) enclose the Peptidase A2 domain. The active-site For protease activity; shared with dimeric partner is D536. Residues 658–848 (EGKLSRVGGD…PPFEWMGYKL (191 aa)) form the Reverse transcriptase domain. 3 residues coordinate Mg(2+): D724, D799, and D800. The segment at 841-849 (FEWMGYKLW) is RT 'primer grip'. Residues 1011–1027 (WEQWWADYWQVSWIPEW) carry the Tryptophan repeat motif motif. Residues 1047 to 1170 (IPGEDVYYVD…IDKLVSKGVR (124 aa)) enclose the RNase H type-1 domain. Residues D1056, E1091, D1111, and D1162 each contribute to the Mg(2+) site. Residues 1176 to 1217 (GRIEEAQEEHDRYHSNWRNLADTFGLPQIVAKEIVAMCPKCQ) form an Integrase-type zinc finger. 4 residues coordinate Zn(2+): H1185, H1189, C1213, and C1216. The Integrase catalytic domain maps to 1227–1377 (VDASPGVWQM…TAAERLINMI (151 aa)). Positions 1237 and 1289 each coordinate Mg(2+). The integrase-type DNA-binding region spans 1396 to 1443 (FRVYYREGRDPVWKGPARLIWKGEGAVVLKEGEELKVVPRRKAKIIKD). Positions 1451-1470 (GDETHLEGAGGSDHQMAGDS) are disordered.

Homotrimer. Interacts with gp41 (via C-terminus). In terms of assembly, homodimer. The active site consists of two apposed aspartic acid residues. As to quaternary structure, heterodimer of p66 RT and p51 RT (RT p66/p51). Heterodimerization of RT is essential for DNA polymerase activity. Despite the sequence identities, p66 RT and p51 RT have distinct folding. Homotetramer; may further associate as a homohexadecamer. It depends on Mg(2+) as a cofactor. In terms of processing, specific enzymatic cleavages by the viral protease yield mature proteins. The protease is released by autocatalytic cleavage. The polyprotein is cleaved during and after budding, this process is termed maturation. Proteolytic cleavage of p66 RT removes the RNase H domain to yield the p51 RT subunit. Post-translationally, capsid protein p24 is phosphorylated.

It localises to the virion. The protein localises to the host nucleus. The protein resides in the host cytoplasm. It is found in the host cell membrane. The catalysed reaction is Specific for a P1 residue that is hydrophobic, and P1' variable, but often Pro.. It carries out the reaction Endohydrolysis of RNA in RNA/DNA hybrids. Three different cleavage modes: 1. sequence-specific internal cleavage of RNA. Human immunodeficiency virus type 1 and Moloney murine leukemia virus enzymes prefer to cleave the RNA strand one nucleotide away from the RNA-DNA junction. 2. RNA 5'-end directed cleavage 13-19 nucleotides from the RNA end. 3. DNA 3'-end directed cleavage 15-20 nucleotides away from the primer terminus.. The enzyme catalyses 3'-end directed exonucleolytic cleavage of viral RNA-DNA hybrid.. It catalyses the reaction DNA(n) + a 2'-deoxyribonucleoside 5'-triphosphate = DNA(n+1) + diphosphate. Its activity is regulated as follows. The viral protease is inhibited by many synthetic protease inhibitors (PIs), such as amprenavir, atazanavir, indinavir, loprinavir, nelfinavir, ritonavir and saquinavir. RT can be inhibited either by nucleoside RT inhibitors (NRTIs) or by non nucleoside RT inhibitors (NNRTIs). NRTIs act as chain terminators, whereas NNRTIs inhibit DNA polymerization by binding a small hydrophobic pocket near the RT active site and inducing an allosteric change in this region. Classical NRTIs are abacavir, adefovir (PMEA), didanosine (ddI), lamivudine (3TC), stavudine (d4T), tenofovir (PMPA), zalcitabine (ddC), and zidovudine (AZT). Classical NNRTIs are atevirdine (BHAP U-87201E), delavirdine, efavirenz (DMP-266), emivirine (I-EBU), and nevirapine (BI-RG-587). The tritherapies used as a basic effective treatment of AIDS associate two NRTIs and one NNRTI. Use of protease inhibitors in tritherapy regimens permit more ambitious therapeutic strategies. Gag-Pol polyprotein and Gag polyprotein may regulate their own translation, by the binding genomic RNA in the 5'-UTR. At low concentration, Gag-Pol and Gag would promote translation, whereas at high concentration, the polyproteins encapsidate genomic RNA and then shut off translation. Functionally, matrix protein p17 has two main functions: in infected cell, it targets Gag and Gag-pol polyproteins to the plasma membrane via a multipartite membrane-binding signal, that includes its myristointegration complex. The myristoylation signal and the NLS exert conflicting influences its subcellular localization. The key regulation of these motifs might be phosphorylation of a portion of MA molecules on the C-terminal tyrosine at the time of virus maturation, by virion-associated cellular tyrosine kinase. Implicated in the release from host cell mediated by Vpu. In terms of biological role, capsid protein p24 forms the conical core that encapsulates the genomic RNA-nucleocapsid complex in the virion. The core is constituted by capsid protein hexamer subunits. The core is disassembled soon after virion entry. Interaction with host PPIA/CYPA protects the virus from restriction by host TRIM5-alpha and from an unknown antiviral activity in host cells. This capsid restriction by TRIM5 is one of the factors which restricts SIV to the simian species. Its function is as follows. Nucleocapsid protein p7 encapsulates and protects viral dimeric unspliced (genomic) RNA. Binds these RNAs through its zinc fingers. Facilitates rearangement of nucleic acid secondary structure during retrotranscription of genomic RNA. This capability is referred to as nucleic acid chaperone activity. The aspartyl protease mediates proteolytic cleavages of Gag and Gag-Pol polyproteins during or shortly after the release of the virion from the plasma membrane. Cleavages take place as an ordered, step-wise cascade to yield mature proteins. This process is called maturation. Displays maximal activity during the budding process just prior to particle release from the cell. Also cleaves Nef and Vif, probably concomitantly with viral structural proteins on maturation of virus particles. Hydrolyzes host EIF4GI and PABP1 in order to shut off the capped cellular mRNA translation. The resulting inhibition of cellular protein synthesis serves to ensure maximal viral gene expression and to evade host immune response. Functionally, reverse transcriptase/ribonuclease H (RT) is a multifunctional enzyme that converts the viral dimeric RNA genome into dsDNA in the cytoplasm, shortly after virus entry into the cell. This enzyme displays a DNA polymerase activity that can copy either DNA or RNA templates, and a ribonuclease H (RNase H) activity that cleaves the RNA strand of RNA-DNA heteroduplexes in a partially processive 3' to 5' endonucleasic mode. Conversion of viral genomic RNA into dsDNA requires many steps. A tRNA binds to the primer-binding site (PBS) situated at the 5'-end of the viral RNA. RT uses the 3' end of the tRNA primer to perform a short round of RNA-dependent minus-strand DNA synthesis. The reading proceeds through the U5 region and ends after the repeated (R) region which is present at both ends of viral RNA. The portion of the RNA-DNA heteroduplex is digested by the RNase H, resulting in a ssDNA product attached to the tRNA primer. This ssDNA/tRNA hybridizes with the identical R region situated at the 3' end of viral RNA. This template exchange, known as minus-strand DNA strong stop transfer, can be either intra- or intermolecular. RT uses the 3' end of this newly synthesized short ssDNA to perform the RNA-dependent minus-strand DNA synthesis of the whole template. RNase H digests the RNA template except for two polypurine tracts (PPTs) situated at the 5'-end and near the center of the genome. It is not clear if both polymerase and RNase H activities are simultaneous. RNase H can probably proceed both in a polymerase-dependent (RNA cut into small fragments by the same RT performing DNA synthesis) and a polymerase-independent mode (cleavage of remaining RNA fragments by free RTs). Secondly, RT performs DNA-directed plus-strand DNA synthesis using the PPTs that have not been removed by RNase H as primers. PPTs and tRNA primers are then removed by RNase H. The 3' and 5' ssDNA PBS regions hybridize to form a circular dsDNA intermediate. Strand displacement synthesis by RT to the PBS and PPT ends produces a blunt ended, linear dsDNA copy of the viral genome that includes long terminal repeats (LTRs) at both ends. In terms of biological role, integrase catalyzes viral DNA integration into the host chromosome, by performing a series of DNA cutting and joining reactions. This enzyme activity takes place after virion entry into a cell and reverse transcription of the RNA genome in dsDNA. The first step in the integration process is 3' processing. This step requires a complex comprising the viral genome, matrix protein, Vpr and integrase. This complex is called the pre-integration complex (PIC). The integrase protein removes 2 nucleotides from each 3' end of the viral DNA, leaving recessed CA OH's at the 3' ends. In the second step, the PIC enters cell nucleus. This process is mediated through integrase and Vpr proteins, and allows the virus to infect a non dividing cell. This ability to enter the nucleus is specific of lentiviruses, other retroviruses cannot and rely on cell division to access cell chromosomes. In the third step, termed strand transfer, the integrase protein joins the previously processed 3' ends to the 5' ends of strands of target cellular DNA at the site of integration. The 5'-ends are produced by integrase-catalyzed staggered cuts, 5 bp apart. A Y-shaped, gapped, recombination intermediate results, with the 5'-ends of the viral DNA strands and the 3' ends of target DNA strands remaining unjoined, flanking a gap of 5 bp. The last step is viral DNA integration into host chromosome. This involves host DNA repair synthesis in which the 5 bp gaps between the unjoined strands are filled in and then ligated. Since this process occurs at both cuts flanking the SIV genome, a 5 bp duplication of host DNA is produced at the ends of SIV integration. Alternatively, Integrase may catalyze the excision of viral DNA just after strand transfer, this is termed disintegration. In Cercopithecidae (Old World monkeys), this protein is Gag-Pol polyprotein (gag-pol).